The primary structure comprises 119 residues: Large ribosomal subunit protein uL18 (119 aa).

The protein belongs to the universal ribosomal protein uL18 family. Part of the 50S ribosomal subunit; part of the 5S rRNA/L5/L18/L25 subcomplex. Contacts the 5S and 23S rRNAs.

In terms of biological role, this is one of the proteins that bind and probably mediate the attachment of the 5S RNA into the large ribosomal subunit, where it forms part of the central protuberance. In Endomicrobium trichonymphae, this protein is Large ribosomal subunit protein uL18.